Consider the following 846-residue polypeptide: Inactive cap-specific mRNA (nucleoside-2'-O-)-methyltransferase 1B (846 aa).

A disordered region spans residues 30-50; it reads DDEDDFVDDPSPTEQKTKAEK. One can recognise a G-patch domain in the interval 44–90; the sequence is QKTKAEKKMERMGYKAGEGLGKNKQGIQEPIAISFREGKAGLGHEQW. Residues 184–413 enclose the RrmJ-type SAM-dependent 2'-O-MTase domain; sequence FFLNRSAMKT…ERFVVCKGLR (230 aa).

The sequence is that of Inactive cap-specific mRNA (nucleoside-2'-O-)-methyltransferase 1B from Caenorhabditis briggsae.